We begin with the raw amino-acid sequence, 308 residues long: ADP-L-glycero-D-manno-heptose-6-epimerase (308 aa).

NADP(+) is bound by residues methionine 10–isoleucine 11, aspartate 31–asparagine 32, lysine 38, lysine 53, glutamate 75–serine 79, and asparagine 92. The active-site Proton acceptor is tyrosine 139. Lysine 143 contacts NADP(+). Asparagine 168 lines the substrate pocket. The NADP(+) site is built by valine 169 and lysine 177. Residue lysine 177 is the Proton acceptor of the active site. Substrate is bound by residues serine 179, histidine 186, phenylalanine 200–serine 203, arginine 208, and tyrosine 271.

It belongs to the NAD(P)-dependent epimerase/dehydratase family. HldD subfamily. Homopentamer. NADP(+) serves as cofactor.

It catalyses the reaction ADP-D-glycero-beta-D-manno-heptose = ADP-L-glycero-beta-D-manno-heptose. Its pathway is nucleotide-sugar biosynthesis; ADP-L-glycero-beta-D-manno-heptose biosynthesis; ADP-L-glycero-beta-D-manno-heptose from D-glycero-beta-D-manno-heptose 7-phosphate: step 4/4. Catalyzes the interconversion between ADP-D-glycero-beta-D-manno-heptose and ADP-L-glycero-beta-D-manno-heptose via an epimerization at carbon 6 of the heptose. This chain is ADP-L-glycero-D-manno-heptose-6-epimerase, found in Mannheimia succiniciproducens (strain KCTC 0769BP / MBEL55E).